We begin with the raw amino-acid sequence, 616 residues long: Protein translocase subunit SecD (616 aa).

6 helical membrane-spanning segments follow: residues 11–31 (LMVI…IYGE), 453–473 (QGIN…LFYY), 475–495 (MFGV…VGLM), 497–517 (ILPG…TLGM), 547–569 (YNGA…IILY), and 585–605 (LGVA…VNAL).

It belongs to the SecD/SecF family. SecD subfamily. Forms a complex with SecF. Part of the essential Sec protein translocation apparatus which comprises SecA, SecYEG and auxiliary proteins SecDF-YajC and YidC.

The protein resides in the cell inner membrane. Functionally, part of the Sec protein translocase complex. Interacts with the SecYEG preprotein conducting channel. SecDF uses the proton motive force (PMF) to complete protein translocation after the ATP-dependent function of SecA. This is Protein translocase subunit SecD from Haemophilus influenzae (strain ATCC 51907 / DSM 11121 / KW20 / Rd).